The sequence spans 848 residues: Adenylate cyclase (848 aa).

The interval 1 to 535 is catalytic; sequence MYLYIETLKQ…DISHHFPLRL (535 aa). Residues 541–848 are regulatory; that stretch reads KALYSPCEIR…SQPAQQFQLH (308 aa).

Belongs to the adenylyl cyclase class-1 family.

It is found in the cytoplasm. The catalysed reaction is ATP = 3',5'-cyclic AMP + diphosphate. The regulatory domain is involved in the regulation of cyclase activity by the carbon source. The protein is Adenylate cyclase (cya) of Yersinia intermedia.